A 121-amino-acid chain; its full sequence is MTQSTEDTLLRLAAVIDSRKGGDPEQSYVSRLFHKGDDAVLKKIGEEATEVVLAAKDVRQGGAPTALVGEVADLWFHCLVMLSHFDLSPADVIAELERREGLSGIEEKALRKRREREANGG.

This sequence belongs to the PRA-PH family.

It localises to the cytoplasm. The enzyme catalyses 1-(5-phospho-beta-D-ribosyl)-ATP + H2O = 1-(5-phospho-beta-D-ribosyl)-5'-AMP + diphosphate + H(+). It functions in the pathway amino-acid biosynthesis; L-histidine biosynthesis; L-histidine from 5-phospho-alpha-D-ribose 1-diphosphate: step 2/9. The polypeptide is Phosphoribosyl-ATP pyrophosphatase (Burkholderia vietnamiensis (strain G4 / LMG 22486) (Burkholderia cepacia (strain R1808))).